Here is a 612-residue protein sequence, read N- to C-terminus: Elongation factor 4 (612 aa).

Residues 11–193 enclose the tr-type G domain; it reads KHIRNFSIVA…RIVTDISAPT (183 aa). GTP contacts are provided by residues 23-28 and 140-143; these read DHGKST and NKID.

Belongs to the TRAFAC class translation factor GTPase superfamily. Classic translation factor GTPase family. LepA subfamily.

It localises to the cell membrane. It catalyses the reaction GTP + H2O = GDP + phosphate + H(+). Its function is as follows. Required for accurate and efficient protein synthesis under certain stress conditions. May act as a fidelity factor of the translation reaction, by catalyzing a one-codon backward translocation of tRNAs on improperly translocated ribosomes. Back-translocation proceeds from a post-translocation (POST) complex to a pre-translocation (PRE) complex, thus giving elongation factor G a second chance to translocate the tRNAs correctly. Binds to ribosomes in a GTP-dependent manner. The chain is Elongation factor 4 from Lactobacillus delbrueckii subsp. bulgaricus (strain ATCC 11842 / DSM 20081 / BCRC 10696 / JCM 1002 / NBRC 13953 / NCIMB 11778 / NCTC 12712 / WDCM 00102 / Lb 14).